A 330-amino-acid polypeptide reads, in one-letter code: Serine/threonine-protein phosphatase PP1-alpha catalytic subunit (330 aa).

N-acetylserine is present on serine 2. Phosphoserine occurs at positions 2 and 22. Positions 64, 66, 92, and 124 each coordinate Mn(2+). The active-site Proton donor is histidine 125. Residues histidine 173 and histidine 248 each contribute to the Mn(2+) site. The residue at position 305 (lysine 305) is an N6-acetyllysine. Tyrosine 306 carries the post-translational modification Phosphotyrosine. Residues tyrosine 306–lysine 330 form a disordered region. At threonine 320 the chain carries Phosphothreonine. Serine 325 is modified (phosphoserine).

It belongs to the PPP phosphatase family. PP-1 subfamily. As to quaternary structure, PP1 comprises a catalytic subunit, PPP1CA, PPP1CB or PPP1CC, which is folded into its native form by inhibitor 2 and glycogen synthetase kinase 3, and then complexed to one or several targeting or regulatory subunits. PPP1R12A, PPP1R12B and PPP1R12C mediate binding to myosin. PPP1R3A (in skeletal muscle), PPP1R3B (in liver), PPP1R3C, PPP1R3D and PPP1R3F (in brain) mediate binding to glycogen. Interacts with PPP1R39. Interacts with BTBD10. Interacts with KCTD20. Interacts with PPP1R9A and PPP1R9B. Part of a complex containing PPP1R15B, PP1 and NCK1/2. Interacts with PHACTR4; which acts as an activator of PP1 activity. Interacts with PPP1R15A and PPP1R15B; the interactions mediate binding to EIF2S1. Interacts with PPP1R7. Interacts with YLPM1. Forms a complex with ILF2, ILF3, YLPM1, KHDRBS1, RBMX and NCOA5. Interacts with NOM1 and PPP1R8. Interacts with PPP1R16B. Interacts with RPSA only in the presence of PPP1R16B. Component of the PNUTS-PP1 phosphatase complex, composed of PPP1R10/PNUTS, TOX4, WDR82, and PPP1CA or PPP1CB or PPP1CC. Interacts with PPP1R10/PNUTS and PPP1R8. Interacts with WDR82 in the presence of PPP1R10/PNUTS. Interacts with TRIM28; the interaction dephosphorylates TRIM28 on 'Ser-824' and forms a complex at the p21 promoter site. Interacts with isoform 1 and isoform 4 of NEK2. Interacts with FER; this promotes phosphorylation at Thr-320. Interacts with DAB2; the interaction is mutually exclusive with the AXIN1:PPP1CA interaction. Interacts with FOXP3. Interacts with CENPA. Interacts with ATG16L1. Found in a complex with PPP1CA, PPP1CC, SHC1 and PEAK1. Interacts with tensin TNS1. Interacts with SAXO4, PPP1R21, PPP1R26, PPP1R27, PPP1R35, PPP1R36, PPP1R37, SH3RF2, ELFN1 and ELFN2. Interacts with TPRN; the interaction results in inhibition of PPC1A phosphatase activity. Interacts with SKA1 (via C-terminus); the interaction is direct and required for the recruitment of PP1 to the kinetochore. Interacts with the KNL1 complex subunit KNL1; the interaction is direct and mutually exclusive with KNL1 binding to microtubules. Component of the SHOC2-MRAS-PP1c (SMP) complex consisting of SHOC2, GTP-bound M-Ras/MRAS and the catalytic subunit of protein phosphatase 1 (either PPP1CA, PPP1CB or PPP1CC). SHOC2 and PP1c preferably bind M-Ras/MRAS, but they also bind K-Ras/KRAS, N-Ras/NRAS and H-Ras/HRAS; these interactions are GTP-dependent and both SHOC2 and PP1c are required to form a stable complex. Interacts with SHOC2 in the absence of Ras GTPases. In terms of assembly, (Microbial infection) Interacts with HHV-1 ICP34.5. (Microbial infection) Interacts with Venezuelan equine encephalitis virus (VEEV) capsid protein; this interaction dephosphorylates the capsid protein, which increases its ability to bind to the viral genome. It depends on Fe cation as a cofactor. Mn(2+) is required as a cofactor. Post-translationally, phosphorylated. Dephosphorylated at Thr-320 in the presence of ionizing radiation.

It localises to the cytoplasm. The protein resides in the nucleus. Its subcellular location is the nucleoplasm. It is found in the nucleolus. It catalyses the reaction O-phospho-L-seryl-[protein] + H2O = L-seryl-[protein] + phosphate. The catalysed reaction is O-phospho-L-threonyl-[protein] + H2O = L-threonyl-[protein] + phosphate. With respect to regulation, the phosphatase activity of the PPP1R15A-PP1 complex toward EIF2S1 is specifically inhibited by Salubrinal, a drug that protects cells from endoplasmic reticulum stress. In terms of biological role, protein phosphatase that associates with over 200 regulatory proteins to form highly specific holoenzymes which dephosphorylate hundreds of biological targets. Protein phosphatase 1 (PP1) is essential for cell division, transcription elongation, and participates in the regulation of glycogen metabolism, muscle contractility and protein synthesis. Involved in regulation of ionic conductances and long-term synaptic plasticity. May play an important role in dephosphorylating substrates such as the postsynaptic density-associated Ca(2+)/calmodulin dependent protein kinase II. Catalytic component of the PNUTS-PP1 protein phosphatase complex, a protein phosphatase 1 (PP1) complex that promotes RNA polymerase II transcription pause-release, allowing transcription elongation: the PNUTS-PP1 complex mediates the release of RNA polymerase II from promoter-proximal region of genes by catalyzing dephosphorylation of proteins involved in transcription, such as AFF4, CDK9, MEPCE, INTS12, NCBP1, POLR2M/GDOWN1 and SUPT6H. The PNUTS-PP1 complex also regulates transcription termination by mediating dephosphorylation of SUPT5H in termination zones downstream of poly(A) sites, thereby promoting deceleration of RNA polymerase II transcription. PNUTS-PP1 complex is also involved in the response to replication stress by mediating dephosphorylation of POLR2A at 'Ser-5' of the CTD, promoting RNA polymerase II degradation. PNUTS-PP1 also plays a role in the control of chromatin structure and cell cycle progression during the transition from mitosis into interphase. Regulates NEK2 function in terms of kinase activity and centrosome number and splitting, both in the presence and absence of radiation-induced DNA damage. Regulator of neural tube and optic fissure closure, and enteric neural crest cell (ENCCs) migration during development. In balance with CSNK1D and CSNK1E, determines the circadian period length, through the regulation of the speed and rhythmicity of PER1 and PER2 phosphorylation. May dephosphorylate CSNK1D and CSNK1E. Dephosphorylates the 'Ser-418' residue of FOXP3 in regulatory T-cells (Treg) from patients with rheumatoid arthritis, thereby inactivating FOXP3 and rendering Treg cells functionally defective. Dephosphorylates CENPA. Dephosphorylates the 'Ser-139' residue of ATG16L1 causing dissociation of ATG12-ATG5-ATG16L1 complex, thereby inhibiting autophagy. Together with PPP1CC (PP1-gamma subunit), dephosphorylates IFIH1/MDA5 and RIG-I leading to their activation and a functional innate immune response. Core component of the SHOC2-MRAS-PP1c (SMP) holophosphatase complex that regulates the MAPK pathway activation. The SMP complex specifically dephosphorylates the inhibitory phosphorylation at 'Ser-259' of RAF1 kinase, 'Ser-365' of BRAF kinase and 'Ser-214' of ARAF kinase, stimulating their kinase activities. The SMP complex enhances the dephosphorylation activity and substrate specificity of PP1c. Functionally, (Microbial infection) Necessary for alphaviruses replication. The sequence is that of Serine/threonine-protein phosphatase PP1-alpha catalytic subunit (PPP1CA) from Homo sapiens (Human).